A 360-amino-acid chain; its full sequence is Putative transport protein BU123 (360 aa).

Helical transmembrane passes span 18 to 38 (IFIV…ILGF), 39 to 59 (FWAS…QKIL), 66 to 86 (AVII…FFLV), 161 to 181 (GLFI…YWNG), 204 to 224 (LLLA…TALI), 230 to 250 (GIGL…IIFF), 251 to 271 (SCLI…WLYW), 280 to 300 (ILLI…PFFI), and 316 to 336 (IGGL…VLVI).

This sequence belongs to the autoinducer-2 exporter (AI-2E) (TC 2.A.86) family.

It localises to the cell membrane. The protein is Putative transport protein BU123 of Buchnera aphidicola subsp. Acyrthosiphon pisum (strain APS) (Acyrthosiphon pisum symbiotic bacterium).